A 483-amino-acid polypeptide reads, in one-letter code: Rhamnulokinase (483 aa).

11–15 (ASSGR) contacts ATP. Substrate contacts are provided by residues Gly-79 and 234-236 (HDT). The active-site Proton acceptor is Asp-235. Thr-257 serves as a coordination point for ATP. Substrate is bound at residue Asn-294. Residue Gln-302 coordinates ATP. Cys-352 and Cys-369 form a disulfide bridge. Gly-401 contacts ATP.

It belongs to the rhamnulokinase family. Requires Mg(2+) as cofactor.

It catalyses the reaction L-rhamnulose + ATP = L-rhamnulose 1-phosphate + ADP + H(+). It functions in the pathway carbohydrate degradation; L-rhamnose degradation; glycerone phosphate from L-rhamnose: step 2/3. In terms of biological role, involved in the catabolism of L-rhamnose (6-deoxy-L-mannose). Catalyzes the transfer of the gamma-phosphate group from ATP to the 1-hydroxyl group of L-rhamnulose to yield L-rhamnulose 1-phosphate. This Listeria monocytogenes serotype 4b (strain F2365) protein is Rhamnulokinase.